The sequence spans 204 residues: Small ribosomal subunit protein uS4c (204 aa).

Positions 90–150 (MRLDNILYRL…GKKTDQLKTI (61 aa)) constitute an S4 RNA-binding domain.

This sequence belongs to the universal ribosomal protein uS4 family. Part of the 30S ribosomal subunit. Contacts protein S5. The interaction surface between S4 and S5 is involved in control of translational fidelity.

Its subcellular location is the plastid. It localises to the chloroplast. In terms of biological role, one of the primary rRNA binding proteins, it binds directly to 16S rRNA where it nucleates assembly of the body of the 30S subunit. With S5 and S12 plays an important role in translational accuracy. The chain is Small ribosomal subunit protein uS4c (rps4) from Gnetum parvifolium (Small-leaved jointfir).